The chain runs to 232 residues: Putative uridine kinase DAS2 (232 aa).

ATP is bound at residue 17-24 (GGHATGVG).

It belongs to the uridine kinase family.

The protein localises to the cytoplasm. It is found in the nucleus. It carries out the reaction uridine + ATP = UMP + ADP + H(+). The catalysed reaction is cytidine + ATP = CMP + ADP + H(+). The protein operates within pyrimidine metabolism; CTP biosynthesis via salvage pathway; CTP from cytidine: step 1/3. It participates in pyrimidine metabolism; UMP biosynthesis via salvage pathway; UMP from uridine: step 1/1. Its function is as follows. Putative uridine kinase identified in a screen for mutants with increased levels of rDNA transcription. The sequence is that of Putative uridine kinase DAS2 (DAS2) from Saccharomyces cerevisiae (strain ATCC 204508 / S288c) (Baker's yeast).